We begin with the raw amino-acid sequence, 87 residues long: U3-theraphotoxin-Hhn1p (87 aa).

The first 24 residues, 1–24, serve as a signal peptide directing secretion; that stretch reads MVNMKASMFLTFAGLVLLFVVCYA. A propeptide spanning residues 25–52 is cleaved from the precursor; the sequence is SESEEKEFPKEMLSSIFAVDNDFKQEER. Cystine bridges form between Cys-54/Cys-67, Cys-61/Cys-72, and Cys-66/Cys-79.

The protein belongs to the neurotoxin 10 (Hwtx-1) family. 51 (Hntx-8) subfamily. Hntx-8 sub-subfamily. In terms of tissue distribution, expressed by the venom gland.

The protein resides in the secreted. Ion channel inhibitor. The protein is U3-theraphotoxin-Hhn1p of Cyriopagopus hainanus (Chinese bird spider).